A 156-amino-acid chain; its full sequence is Movement protein P17 (156 aa).

Residues 38–54 (AEDAEEEAIAAQEELEF) are homodimerization. 2 disordered regions span residues 55–80 (PEDE…EVSP) and 106–156 (ASYF…IKRG). An RNA-binding region spans residues 57-156 (DEAQARHSCL…RAAPKLIKRG (100 aa)). 4 positions are modified to phosphoserine: serine 71, serine 79, serine 137, and serine 140. Positions 144–156 (KLRRAAPKLIKRG) are enriched in basic residues.

The protein belongs to the polerovirus movement protein family. As to quaternary structure, homodimer. Expressed as a nonphosphorylated 20kDa form and a phosphorylated 22kDa form. Phosphorylated by a host PKC-related kinase. Serine phosphorylation is required for plamodesma targeting.

It is found in the host cell junction. The protein localises to the host plasmodesma. The protein resides in the host chloroplast envelope. It localises to the host Golgi apparatus. Its subcellular location is the host mitochondrion outer membrane. Its function is as follows. Together with movement protein P3a, facilitates long-distance movement of virions in host. Transports viral genome to neighboring plant cells directly through plasmosdesmata, without any budding. The movement protein allows efficient cell to cell propagation, by bypassing the host cell wall barrier. Binds ssRNA. The protein is Movement protein P17 of Potato leafroll virus (strain Potato/Canada/Rowhani/1979) (PLrV).